Reading from the N-terminus, the 546-residue chain is Acyl-CoA ligase oryP (546 aa).

Residues 166-174 (TSGTTGAPK), 300-305 (QFWLNL), and Arg-403 each bind ATP. CoA contacts are provided by residues 412–414 (WDH) and 482–484 (LLR). Lys-499 contributes to the ATP binding site.

The protein belongs to the ATP-dependent AMP-binding enzyme family.

The protein operates within secondary metabolite biosynthesis. In terms of biological role, acyl-CoA ligase; part of the gene cluster that mediates the biosynthesis of oryzines, natural products with an unusual maleidride backbone. The two subunits of the fungal fatty acid synthase oryfasA and oryfasB probably form octenoic acid. This fatty acid is most likely activated by the acyl-CoA ligase oryP to give octenyl-CoA before the citrate synthase-like protein oryE catalyzes condensation with oxaloacetate to form tricarboxylic acid. The next steps of the pathways are conjectural, but a favorite possible route has been proposed, beginning with decarboxylation and concomitant dehydration by the decarboxylase oryM, followed by tautomerization, which may lead to the production of a diene intermediate. Reduction of this diene intermediate could give the known metabolite piliformic acid. On the pathway to oryzine B and oryzine A, however, hydroxylation of the diene by the alpha-ketoglutarate-dependent dioxygenase oryG and lactonisation by the lactonohydrolases oryH or oryL could give oryzine B directly. Finally, enoyl reduction by the dehydrogenase oryD would then convert oryzine B into oryzine A. This chain is Acyl-CoA ligase oryP, found in Aspergillus oryzae (strain ATCC 42149 / RIB 40) (Yellow koji mold).